The primary structure comprises 1299 residues: DNA-directed RNA polymerase subunit beta' (1299 aa).

Residues cysteine 60, cysteine 62, cysteine 75, and cysteine 78 each coordinate Zn(2+). Aspartate 535, aspartate 537, and aspartate 539 together coordinate Mg(2+). Residues cysteine 877, cysteine 954, cysteine 961, and cysteine 964 each contribute to the Zn(2+) site.

It belongs to the RNA polymerase beta' chain family. In terms of assembly, the RNAP catalytic core consists of 2 alpha, 1 beta, 1 beta' and 1 omega subunit. When a sigma factor is associated with the core the holoenzyme is formed, which can initiate transcription. It depends on Mg(2+) as a cofactor. Zn(2+) is required as a cofactor.

The enzyme catalyses RNA(n) + a ribonucleoside 5'-triphosphate = RNA(n+1) + diphosphate. In terms of biological role, DNA-dependent RNA polymerase catalyzes the transcription of DNA into RNA using the four ribonucleoside triphosphates as substrates. The sequence is that of DNA-directed RNA polymerase subunit beta' from Pseudarthrobacter chlorophenolicus (strain ATCC 700700 / DSM 12829 / CIP 107037 / JCM 12360 / KCTC 9906 / NCIMB 13794 / A6) (Arthrobacter chlorophenolicus).